The following is a 516-amino-acid chain: Protein phosphatase 1H (516 aa).

Disordered stretches follow at residues 102-122 (ADPS…PSGD) and 181-202 (PPTC…SGSQ). The PPM-type phosphatase domain occupies 106 to 506 (SVSYTPSRRR…DDISVFIIPL (401 aa)). Over residues 190-202 (PNPQLHASASGSQ) the composition is skewed to polar residues.

It belongs to the PP2C family.

The protein resides in the nucleus. It localises to the cytoplasm. The enzyme catalyses O-phospho-L-seryl-[protein] + H2O = L-seryl-[protein] + phosphate. It catalyses the reaction O-phospho-L-threonyl-[protein] + H2O = L-threonyl-[protein] + phosphate. The protein is Protein phosphatase 1H (ppm1h) of Danio rerio (Zebrafish).